Here is a 414-residue protein sequence, read N- to C-terminus: 2,3-diketo-5-methylthiopentyl-1-phosphate enolase (414 aa).

Catalysis depends on K99, which acts as the Proton acceptor. Residues K148, 174–177 (KDDE), H265, G338, and 360–361 (GG) each bind substrate. Mg(2+)-binding residues include K174, D176, and E177. Position 174 is an N6-carboxylysine (K174).

The protein belongs to the RuBisCO large chain family. Type IV subfamily. As to quaternary structure, homodimer. Mg(2+) serves as cofactor.

It carries out the reaction 5-methylsulfanyl-2,3-dioxopentyl phosphate = 2-hydroxy-5-methylsulfanyl-3-oxopent-1-enyl phosphate. Its pathway is amino-acid biosynthesis; L-methionine biosynthesis via salvage pathway; L-methionine from S-methyl-5-thio-alpha-D-ribose 1-phosphate: step 3/6. Functionally, catalyzes the enolization of 2,3-diketo-5-methylthiopentyl-1-phosphate (DK-MTP-1-P) into 2-hydroxy-3-keto-5-methylthiopentenyl-1-phosphate (HK-MTPenyl-1-P). This is 2,3-diketo-5-methylthiopentyl-1-phosphate enolase from Bacillus mycoides (strain KBAB4) (Bacillus weihenstephanensis).